A 221-amino-acid chain; its full sequence is UPF0758 protein PC1_4100 (221 aa).

The region spanning 99–221 is the MPN domain; that stretch reads AMLNPQATGQ…YVSFAERGWI (123 aa). Zn(2+) contacts are provided by His-170, His-172, and Asp-183. The JAMM motif motif lies at 170-183; it reads HNHPSGKAEPSQAD.

The protein belongs to the UPF0758 family. YicR subfamily.

The protein is UPF0758 protein PC1_4100 of Pectobacterium carotovorum subsp. carotovorum (strain PC1).